The sequence spans 135 residues: Large ribosomal subunit protein bL17 (135 aa).

Belongs to the bacterial ribosomal protein bL17 family. As to quaternary structure, part of the 50S ribosomal subunit. Contacts protein L32.

The chain is Large ribosomal subunit protein bL17 from Listeria monocytogenes serotype 4b (strain CLIP80459).